The primary structure comprises 408 residues: LL-diaminopimelate aminotransferase (408 aa).

Residues Tyr-15 and Gly-42 each coordinate substrate. Pyridoxal 5'-phosphate is bound by residues Tyr-72, 108-109 (SK), Tyr-132, Asn-187, Tyr-218, and 246-248 (SFS). Residues Lys-109, Tyr-132, and Asn-187 each coordinate substrate. The residue at position 249 (Lys-249) is an N6-(pyridoxal phosphate)lysine. Residues Arg-257 and Asn-292 each coordinate pyridoxal 5'-phosphate. The substrate site is built by Asn-292 and Arg-388.

It belongs to the class-I pyridoxal-phosphate-dependent aminotransferase family. LL-diaminopimelate aminotransferase subfamily. As to quaternary structure, homodimer. The cofactor is pyridoxal 5'-phosphate.

It catalyses the reaction (2S,6S)-2,6-diaminopimelate + 2-oxoglutarate = (S)-2,3,4,5-tetrahydrodipicolinate + L-glutamate + H2O + H(+). It participates in amino-acid biosynthesis; L-lysine biosynthesis via DAP pathway; LL-2,6-diaminopimelate from (S)-tetrahydrodipicolinate (aminotransferase route): step 1/1. Its function is as follows. Involved in the synthesis of meso-diaminopimelate (m-DAP or DL-DAP), required for both lysine and peptidoglycan biosynthesis. Catalyzes the direct conversion of tetrahydrodipicolinate to LL-diaminopimelate. This chain is LL-diaminopimelate aminotransferase, found in Prochlorococcus marinus subsp. pastoris (strain CCMP1986 / NIES-2087 / MED4).